The primary structure comprises 574 residues: Fusion glycoprotein F0 (574 aa).

The N-terminal stretch at 1–25 is a signal peptide; that stretch reads MELLIHRLSAIFLTLAINALYLTSS. At 26 to 524 the chain is on the extracellular side; that stretch reads QNITEEFYQS…NVNTGKSTTN (499 aa). 2 N-linked (GlcNAc...) asparagine; by host glycosylation sites follow: Asn-27 and Asn-70. Disulfide bonds link Cys-37–Cys-439, Cys-69–Cys-212, Cys-313–Cys-343, Cys-322–Cys-333, Cys-358–Cys-367, Cys-382–Cys-393, and Cys-416–Cys-422. Residues 76 to 96 are a coiled coil; sequence VKLIKQELDKYKNAVTELQLL. 3 N-linked (GlcNAc...) asparagine; by host glycosylation sites follow: Asn-116, Asn-120, and Asn-126. The segment at 137-157 is fusion peptide; the sequence is FLGFLLGVGSAIASGIAVSKV. The stretch at 158-209 forms a coiled coil; that stretch reads LHLEGEVNKIKNALLSTNKAVVSLSNGVSVLTSKVLDLKNYINNQLLPIVNQ. The stretch at 481 to 516 forms a coiled coil; sequence LVFPSDEFDASISQVNEKINQSLAFIRRSDELLHNV. The N-linked (GlcNAc...) asparagine; by host glycan is linked to Asn-500. Residues 525-550 form a helical membrane-spanning segment; the sequence is IMITTIIIVIIVVLLSLIAIGLLLYC. The S-palmitoyl cysteine; by host moiety is linked to residue Cys-550. The Cytoplasmic portion of the chain corresponds to 551 to 574; the sequence is KAKNTPVTLSKDQLSGINNIAFSK.

The protein belongs to the paramyxoviruses fusion glycoprotein family. Homotrimer. Heterodimer with fusion protein F2; disulfide-linked. Interacts with host NCL; this interaction plays a role in viral entry into the host cell. As a heterodimer with F2, interacts with host heparan sulfate. As a heterodimer with F2, interacts with host IGF1R; this interaction activates PRKCZ/PKCzeta that recruits NCL/nucleolin from the host nucleus to the plasma membrane. Part of a complex composed of F1, F2 and G glycoproteins. As a heterodimer with F2, interacts with host RHOA; this interaction facilitates virus-induced syncytium formation. In terms of assembly, homotrimer. Heterodimer with fusion protein F1; disulfide-linked. As a heterodimer with F1, interacts with host heparan sulfate. As a heterodimer with F1, interacts with host IGF1R; this interaction activates PRKCZ/PKCzeta that recruits NCL/nucleolin from the host nucleus to the plasma membrane. Part of a complex composed of F1, F2 and G glycoproteins. As a heterodimer with F1, interacts with host RHOA; this interaction facilitates virus-induced syncytium formation. In terms of processing, the F glycoprotein is synthesized as a F0 inactive precursor that is heavily N-glycosylated and processed at two sites by a host furin-like protease probably in the Golgi. The cleavage site between p27 and F1 may occur after endocytosis to yield the mature F1 and F2 proteins. Both cleavages are required for membrane fusion and p27 is released from the processed protein.

The protein localises to the host Golgi apparatus membrane. It is found in the virion membrane. The protein resides in the host cell membrane. Inactive precursor that is cleaved at two sites by a furin-like protease to give rise to the mature F1 and F2 fusion glycoproteins. Its function is as follows. Class I viral fusion protein. Under the current model, the protein has at least 3 conformational states: pre-fusion native state, pre-hairpin intermediate state, and post-fusion hairpin state. During viral and plasma cell membrane fusion, the coiled coil regions assume a trimer-of-hairpins structure, positioning the fusion peptide in close proximity to the C-terminal region of the ectodomain. The formation of this structure appears to drive apposition and subsequent fusion of viral and cellular membranes leading to delivery of the nucleocapsid into the cytoplasm. This fusion is pH independent and occurs at the plasma or endosomal membrane. The trimer of F1-F2 (F protein) also facilitates the attachment to host cell by binding to host heparan sulfate. F protein is involved in the entry into the host cell through the interaction with host IGF1R. This interaction activates PRKCZ/PKCzeta that recruits host NCL/nucleolin to the apical cell surface where it can bind fusion glycoprotein F1. Later in infection, F protein expressed at the plasma membrane of infected cells can mediate fusion with adjacent cells to form syncytia, a cytopathic effect that could lead to tissue necrosis. F protein may trigger p53-dependent apoptosis. In terms of biological role, major determinant of the species specificity of RSV infection. The trimer of F1-F2 (F protein) also facilitates the attachment to host cell by binding to host heparan sulfate. F protein is involved in the entry into the host cell through the interaction with host IGF1R. This interaction activates PRKCZ/PKCzeta that recruits host NCL/nucleolin to the apical cell surface where it can bind fusion glycoprotein F1. Later in infection, F protein expressed at the plasma membrane of infected cells can mediate fusion with adjacent cells to form syncytia, a cytopathic effect that could lead to tissue necrosis. F protein seems to trigger p53-dependent apoptosis. The protein is Fusion glycoprotein F0 (F) of Human respiratory syncytial virus B (strain B1).